The primary structure comprises 403 residues: Phosphoglycerate kinase (403 aa).

Substrate contacts are provided by residues 21–23 (DFN), Arg-36, 59–62 (HLGR), Arg-119, and Arg-159. Residues Lys-214, Gly-301, Glu-332, and 359–362 (GGDS) contribute to the ATP site.

The protein belongs to the phosphoglycerate kinase family. In terms of assembly, monomer.

The protein localises to the cytoplasm. The catalysed reaction is (2R)-3-phosphoglycerate + ATP = (2R)-3-phospho-glyceroyl phosphate + ADP. Its pathway is carbohydrate degradation; glycolysis; pyruvate from D-glyceraldehyde 3-phosphate: step 2/5. The chain is Phosphoglycerate kinase from Lactobacillus johnsonii (strain CNCM I-12250 / La1 / NCC 533).